A 198-amino-acid chain; its full sequence is Na(+)-translocating NADH-quinone reductase subunit E (198 aa).

A run of 6 helical transmembrane segments spans residues 11–31 (AVFIENMALAFFLGMCTFLAV), 35–55 (VTTAFGLGIAVTVVLGISVPA), 77–97 (FLNFITFIGVIAALVQILEMI), 109–129 (LGIFLPLITVNCAIFGGVSFM), 140–160 (IVYGFGSGIGWMLAIVLLASI), and 176–196 (LGITFVTTGLMALGFMSFSGV).

Belongs to the NqrDE/RnfAE family. As to quaternary structure, composed of six subunits; NqrA, NqrB, NqrC, NqrD, NqrE and NqrF.

It is found in the cell inner membrane. The enzyme catalyses a ubiquinone + n Na(+)(in) + NADH + H(+) = a ubiquinol + n Na(+)(out) + NAD(+). NQR complex catalyzes the reduction of ubiquinone-1 to ubiquinol by two successive reactions, coupled with the transport of Na(+) ions from the cytoplasm to the periplasm. NqrA to NqrE are probably involved in the second step, the conversion of ubisemiquinone to ubiquinol. The sequence is that of Na(+)-translocating NADH-quinone reductase subunit E from Photorhabdus laumondii subsp. laumondii (strain DSM 15139 / CIP 105565 / TT01) (Photorhabdus luminescens subsp. laumondii).